A 74-amino-acid polypeptide reads, in one-letter code: Protein SlyX homolog (74 aa).

It belongs to the SlyX family.

The chain is Protein SlyX homolog from Neisseria meningitidis serogroup A / serotype 4A (strain DSM 15465 / Z2491).